The following is a 625-amino-acid chain: Pheromone-processing carboxypeptidase KEX1 (625 aa).

Residues 1-24 (MRLAASSLLLGAAASLLSSATALA) form the signal peptide. The Lumenal segment spans residues 25-516 (VRSDNPGSSA…DQARWAAYYR (492 aa)). Active-site residues include Ser-182 and Asp-381. Asn-434 and Asn-442 each carry an N-linked (GlcNAc...) asparagine glycan. His-445 is a catalytic residue. An N-linked (GlcNAc...) asparagine glycan is attached at Asn-494. The helical transmembrane segment at 517 to 537 (SGEVALVLVASAAAIWGIFIW) threads the bilayer. The Cytoplasmic portion of the chain corresponds to 538–625 (RQRHRRRGRR…GRIEKRPSVG (88 aa)). Positions 601-625 (RYSLGGVSDDESDDEGRIEKRPSVG) are disordered. Residues 615-625 (EGRIEKRPSVG) show a composition bias toward basic and acidic residues.

It belongs to the peptidase S10 family.

It localises to the golgi apparatus. The protein resides in the trans-Golgi network membrane. The enzyme catalyses Preferential release of a C-terminal arginine or lysine residue.. Functionally, protease with a carboxypeptidase B-like function involved in the C-terminal processing of the lysine and arginine residues from protein precursors. Promotes cell fusion and is involved in the programmed cell death. In Tuber melanosporum (strain Mel28) (Perigord black truffle), this protein is Pheromone-processing carboxypeptidase KEX1 (KEX1).